A 365-amino-acid polypeptide reads, in one-letter code: Chorismate synthase (365 aa).

The NADP(+) site is built by R48 and R54. Residues 131 to 133, 243 to 244, G288, 303 to 307, and R329 each bind FMN; these read RSS, NA, and KPTSS.

This sequence belongs to the chorismate synthase family. As to quaternary structure, homotetramer. Requires FMNH2 as cofactor.

It catalyses the reaction 5-O-(1-carboxyvinyl)-3-phosphoshikimate = chorismate + phosphate. The protein operates within metabolic intermediate biosynthesis; chorismate biosynthesis; chorismate from D-erythrose 4-phosphate and phosphoenolpyruvate: step 7/7. Its function is as follows. Catalyzes the anti-1,4-elimination of the C-3 phosphate and the C-6 proR hydrogen from 5-enolpyruvylshikimate-3-phosphate (EPSP) to yield chorismate, which is the branch point compound that serves as the starting substrate for the three terminal pathways of aromatic amino acid biosynthesis. This reaction introduces a second double bond into the aromatic ring system. This chain is Chorismate synthase, found in Sinorhizobium fredii (strain NBRC 101917 / NGR234).